Consider the following 198-residue polypeptide: MEKRGRGVKSSPIQTPNQTPQQAPVTPRKERRPSMFEKEAYTQILRERLRESIHNVQYVEPPFDDSIADIGKEWKSALAKLKFANSYRMEPLKKFQAHSVETKVQQILTESLKDVKYDDKVFSHLSLELADRILLAVKEFGYHRYKFIIKVLFIQKTGQAINIASRWIWDIAWDSWVAAKHEAESYVALVLVFALYYE.

A disordered region spans residues 1 to 34; sequence MEKRGRGVKSSPIQTPNQTPQQAPVTPRKERRPS. A compositionally biased stretch (polar residues) spans 11–24; that stretch reads SPIQTPNQTPQQAP.

This sequence belongs to the dynein light chain Tctex-type family. Interacts with CCDC159. Interacts with CSNK2B. Expressed predominantly in testis. Also expressed in brain, lung and trachea.

The protein localises to the cytoplasm. It localises to the cytoskeleton. Its subcellular location is the cytoplasmic granule. The protein resides in the membrane. Functionally, may be an accessory component of axonemal dynein and cytoplasmic dynein 1. Candidate for involvement in male sterility. In Homo sapiens (Human), this protein is Dynein light chain Tctex-type protein 2.